The following is an 85-amino-acid chain: MSDKIRTLQGRVISDKMEKSFTIAIARYVKHPIYGKFIRRTTKLHVHDENNEVQAGDVVTIRECAPISKSKSWTFVAVIERPKQA.

The protein belongs to the universal ribosomal protein uS17 family. Part of the 30S ribosomal subunit.

One of the primary rRNA binding proteins, it binds specifically to the 5'-end of 16S ribosomal RNA. This Pseudoalteromonas translucida (strain TAC 125) protein is Small ribosomal subunit protein uS17.